A 359-amino-acid chain; its full sequence is MVSAIVLAGGYATRLRPLSLTKPKALLPVLGKPLMDYTLYSLASSDVDTIYLSLRVMADKVLDHVKQLNLQKNIVSVIEESRLGDAGPLKFINSKYNLSDDVIVVYGDIYAEIDFNKLLEYHQSKGCNATLTATQVEDPSRYGVLITDGHRLIQIIEKPKTPLSNLVNAGIYVFKKELLNKIDGLSISRDFLPKLLVSDTCVSVYPYKGLWMDIGVPRDYMRINLELLTLKYPKGFISQSAKVSEKAELFPPFYIGDNTTVGEGSSIRNSIIGVNNRIGNGSCVEESILMNDVMLGDFSLIKESVIGDEVSLGKWNRVDGAIIGDGVLIHDQVFINRDTIILPDKEVAESVYDKGKIIL.

The protein belongs to the transferase hexapeptide repeat family.

It carries out the reaction alpha-D-mannose 1-phosphate + GTP + H(+) = GDP-alpha-D-mannose + diphosphate. In Sulfolobus acidocaldarius (strain ATCC 33909 / DSM 639 / JCM 8929 / NBRC 15157 / NCIMB 11770), this protein is Putative mannose-1-phosphate guanyltransferase (mpg1).